Consider the following 145-residue polypeptide: D-aminoacyl-tRNA deacylase (145 aa).

The Gly-cisPro motif, important for rejection of L-amino acids signature appears at 137 to 138 (GP).

This sequence belongs to the DTD family. As to quaternary structure, homodimer.

Its subcellular location is the cytoplasm. The catalysed reaction is glycyl-tRNA(Ala) + H2O = tRNA(Ala) + glycine + H(+). The enzyme catalyses a D-aminoacyl-tRNA + H2O = a tRNA + a D-alpha-amino acid + H(+). An aminoacyl-tRNA editing enzyme that deacylates mischarged D-aminoacyl-tRNAs. Also deacylates mischarged glycyl-tRNA(Ala), protecting cells against glycine mischarging by AlaRS. Acts via tRNA-based rather than protein-based catalysis; rejects L-amino acids rather than detecting D-amino acids in the active site. By recycling D-aminoacyl-tRNA to D-amino acids and free tRNA molecules, this enzyme counteracts the toxicity associated with the formation of D-aminoacyl-tRNA entities in vivo and helps enforce protein L-homochirality. The sequence is that of D-aminoacyl-tRNA deacylase from Shewanella sp. (strain MR-4).